Consider the following 355-residue polypeptide: MKKVVVGLSGGVDSSVAAASLKEKGYEVIGLTLWLMQGKGQCCSDGLVDAAQLCEDLDIPHHVVDSRDLFSNNIIDYLVEGYQQGITPLPCSQCNKTVKFGPMLNYARHELDTDTIATGHYARIAYSEKEKRYQLLRAVDRNKDQSYFLYDLDQDLLSGTVFPLGDHTKTETRRMATQLDLHTAEKPESQDLCLIEAHGSMQTFLDQYIETHPGEIVDQEGNILGHHQGVHHFTIGQRRGIGVAAPHPLYVVDLDPGKNRVIVGDRETALKTECMVKRVNWVSIAPPQNPIHAEVQVRYRSKPTGVTIIPLDAEAPGGRVKLVFEDPQFGIAPGQAAVWYDQEILLGGGIIEAFS.

Residues 7–14 (GLSGGVDS) and L33 each bind ATP. Catalysis depends on C94, which acts as the Nucleophile. The cysteines at positions 94 and 193 are disulfide-linked. ATP is bound at residue G119. The segment at 143 to 145 (KDQ) is interaction with tRNA. C193 (cysteine persulfide intermediate) is an active-site residue. The segment at 298 to 299 (RY) is interaction with tRNA.

The protein belongs to the MnmA/TRMU family.

The protein localises to the cytoplasm. It catalyses the reaction S-sulfanyl-L-cysteinyl-[protein] + uridine(34) in tRNA + AH2 + ATP = 2-thiouridine(34) in tRNA + L-cysteinyl-[protein] + A + AMP + diphosphate + H(+). Functionally, catalyzes the 2-thiolation of uridine at the wobble position (U34) of tRNA, leading to the formation of s(2)U34. The polypeptide is tRNA-specific 2-thiouridylase MnmA (Acaryochloris marina (strain MBIC 11017)).